The following is a 65-amino-acid chain: Large ribosomal subunit protein uL29 (65 aa).

This sequence belongs to the universal ribosomal protein uL29 family.

This is Large ribosomal subunit protein uL29 from Paracidovorax citrulli (strain AAC00-1) (Acidovorax citrulli).